The primary structure comprises 314 residues: tRNA dimethylallyltransferase (314 aa).

An ATP-binding site is contributed by 10–17; the sequence is GPTAVGKT. 12 to 17 contributes to the substrate binding site; the sequence is TAVGKT. The interaction with substrate tRNA stretch occupies residues 35 to 38; it reads DSMQ.

It belongs to the IPP transferase family. In terms of assembly, monomer. Requires Mg(2+) as cofactor.

The enzyme catalyses adenosine(37) in tRNA + dimethylallyl diphosphate = N(6)-dimethylallyladenosine(37) in tRNA + diphosphate. Functionally, catalyzes the transfer of a dimethylallyl group onto the adenine at position 37 in tRNAs that read codons beginning with uridine, leading to the formation of N6-(dimethylallyl)adenosine (i(6)A). The chain is tRNA dimethylallyltransferase from Clostridium novyi (strain NT).